Consider the following 165-residue polypeptide: Nucleotide-binding protein NATL1_05371 (165 aa).

It belongs to the YajQ family.

In terms of biological role, nucleotide-binding protein. This is Nucleotide-binding protein NATL1_05371 from Prochlorococcus marinus (strain NATL1A).